A 189-amino-acid chain; its full sequence is Large ribosomal subunit protein bL9 (189 aa).

The protein belongs to the bacterial ribosomal protein bL9 family.

Its function is as follows. Binds to the 23S rRNA. The chain is Large ribosomal subunit protein bL9 from Cereibacter sphaeroides (strain ATCC 17025 / ATH 2.4.3) (Rhodobacter sphaeroides).